The primary structure comprises 162 residues: Phosphopantetheine adenylyltransferase (162 aa).

Ser11 contacts substrate. Residues 11–12 (SF) and His19 contribute to the ATP site. Residues Lys43, Leu75, and Arg89 each coordinate substrate. ATP contacts are provided by residues 90–92 (GLR), Glu100, and 125–131 (YSYLSSS).

This sequence belongs to the bacterial CoaD family. In terms of assembly, homohexamer. It depends on Mg(2+) as a cofactor.

It localises to the cytoplasm. It catalyses the reaction (R)-4'-phosphopantetheine + ATP + H(+) = 3'-dephospho-CoA + diphosphate. It participates in cofactor biosynthesis; coenzyme A biosynthesis; CoA from (R)-pantothenate: step 4/5. Functionally, reversibly transfers an adenylyl group from ATP to 4'-phosphopantetheine, yielding dephospho-CoA (dPCoA) and pyrophosphate. The chain is Phosphopantetheine adenylyltransferase from Geotalea uraniireducens (strain Rf4) (Geobacter uraniireducens).